Reading from the N-terminus, the 937-residue chain is C-1-tetrahydrofolate synthase, cytoplasmic (937 aa).

The methylenetetrahydrofolate dehydrogenase and cyclohydrolase stretch occupies residues 1 to 309 (MALLLEGTSL…TLLPLKLQTP (309 aa)). Substrate is bound by residues 50-54 (YVRMK) and 97-99 (VQL). NADP(+) is bound by residues 168–170 (GRS) and Ser-193. A substrate-binding site is contributed by 268-272 (PGSVG). A formyltetrahydrofolate synthetase region spans residues 310-937 (VPSDIEIARS…AENGDIVGLS (628 aa)). 374-381 (TPFGEGKS) contacts ATP.

The protein in the N-terminal section; belongs to the tetrahydrofolate dehydrogenase/cyclohydrolase family. This sequence in the C-terminal section; belongs to the formate--tetrahydrofolate ligase family. As to quaternary structure, homodimer.

Its subcellular location is the cytoplasm. The enzyme catalyses (6R)-5,10-methylene-5,6,7,8-tetrahydrofolate + NADP(+) = (6R)-5,10-methenyltetrahydrofolate + NADPH. It carries out the reaction (6R)-5,10-methenyltetrahydrofolate + H2O = (6R)-10-formyltetrahydrofolate + H(+). It catalyses the reaction (6S)-5,6,7,8-tetrahydrofolate + formate + ATP = (6R)-10-formyltetrahydrofolate + ADP + phosphate. The protein operates within one-carbon metabolism; tetrahydrofolate interconversion. The sequence is that of C-1-tetrahydrofolate synthase, cytoplasmic from Schizosaccharomyces pombe (strain 972 / ATCC 24843) (Fission yeast).